A 233-amino-acid chain; its full sequence is MKLFDCAPLSLAWREFLQSEFKKPYFLEIEKRYLEALKSPKTIFPKSSNLFYALNLTPPSAVKIILLGQDPYHSTYLKNQQELPVAMGLSFSVGKNAPIPPSLKNIFKELHANLGVSVPCCGDLSAWAKRGMLLLNAILSVEKNQAASHKRIGWEAFSDQILMRLFEANAPLIVVLLGKIAQKKIALIPKNKHIIITAPHPSPLSRGFLGSGVFTSIQNAHREIYHKDFDFSL.

Aspartate 70 functions as the Proton acceptor in the catalytic mechanism.

Belongs to the uracil-DNA glycosylase (UDG) superfamily. UNG family.

Its subcellular location is the cytoplasm. It carries out the reaction Hydrolyzes single-stranded DNA or mismatched double-stranded DNA and polynucleotides, releasing free uracil.. Its function is as follows. Excises uracil residues from the DNA which can arise as a result of misincorporation of dUMP residues by DNA polymerase or due to deamination of cytosine. This Helicobacter pylori (strain Shi470) protein is Uracil-DNA glycosylase.